A 147-amino-acid polypeptide reads, in one-letter code: Large ribosomal subunit protein uL15 (147 aa).

The segment at 1–42 (MTIKLHHLRPAPGSKSNKIRVGRGEGGKRGKTAGRGTKGTKA) is disordered.

Belongs to the universal ribosomal protein uL15 family. In terms of assembly, part of the 50S ribosomal subunit.

Functionally, binds to the 23S rRNA. This Rhodococcus erythropolis (strain PR4 / NBRC 100887) protein is Large ribosomal subunit protein uL15.